Reading from the N-terminus, the 394-residue chain is Putative transporter AraJ (394 aa).

Residues 1-4 (MKKV) lie on the Cytoplasmic side of the membrane. A helical membrane pass occupies residues 5–27 (ILSLALGTFGLGMAEFGIMGVLT). Residues 28–41 (ELAHNVGISIPAAG) lie on the Periplasmic side of the membrane. A helical membrane pass occupies residues 42–63 (HMISYYALGVVVGAPIIALFSS). Residues 64–69 (RYSLKH) lie on the Cytoplasmic side of the membrane. A helical transmembrane segment spans residues 70 to 89 (ILLFLVALCVIGNAMFTLSS). Residues 90–93 (SYLM) are Periplasmic-facing. A helical membrane pass occupies residues 94–116 (LAIGRLVSGFPHGAFFGVGAIVL). At 117–128 (SKIIKPGKVTAA) the chain is on the cytoplasmic side. Residues 129 to 151 (VAGMVSGMTVANLLGIPLGTYLS) traverse the membrane as a helical segment. The Periplasmic portion of the chain corresponds to 152 to 155 (QEFS). A helical transmembrane segment spans residues 156–178 (WRYTFLLIAVFNIAVMASVYFWV). At 179–198 (PDIRDEAKGNLREQFHFLRS) the chain is on the cytoplasmic side. Residues 199–221 (PAPWLIFAATMFGNAGVFAWFSY) form a helical membrane-spanning segment. The Periplasmic portion of the chain corresponds to 222-235 (VKPYMMFISGFSET). A helical membrane pass occupies residues 236–255 (AMTFIMMLVGLGMVLGNMLS). Residues 256–261 (GRISGR) lie on the Cytoplasmic side of the membrane. The helical transmembrane segment at 262-284 (YSPLRIAAVTDFIIVLALLMLFF) threads the bilayer. Residues 285 to 293 (CGGMKTTSL) lie on the Periplasmic side of the membrane. A helical membrane pass occupies residues 294–316 (IFAFICCAGLFALSAPLQILLLQ). Residues 317 to 322 (NAKGGE) are Cytoplasmic-facing. A helical transmembrane segment spans residues 323–342 (LLGAAGGQIAFNLGSAVGAY). At 343–351 (CGGMMLTLG) the chain is on the periplasmic side. Residues 352–374 (LAYNYVALPAALLSFAAMSSLLL) form a helical membrane-spanning segment. Topologically, residues 375 to 394 (YGRYKRQQAADTPVLAKPLG) are cytoplasmic.

This sequence belongs to the major facilitator superfamily.

It localises to the cell inner membrane. Its function is as follows. May be involved in either the transport or processing of arabinose polymers. The chain is Putative transporter AraJ (araJ) from Escherichia coli (strain K12).